A 551-amino-acid polypeptide reads, in one-letter code: Methionine--tRNA ligase (551 aa).

Positions 12 to 22 (PYANGPLHFGH) match the 'HIGH' region motif. Zn(2+)-binding residues include Cys-144, Cys-147, Cys-157, and Cys-160. A 'KMSKS' region motif is present at residues 330-334 (QFSKS). Lys-333 contacts ATP.

This sequence belongs to the class-I aminoacyl-tRNA synthetase family. MetG type 1 subfamily. Monomer. Requires Zn(2+) as cofactor.

It localises to the cytoplasm. The catalysed reaction is tRNA(Met) + L-methionine + ATP = L-methionyl-tRNA(Met) + AMP + diphosphate. Is required not only for elongation of protein synthesis but also for the initiation of all mRNA translation through initiator tRNA(fMet) aminoacylation. This is Methionine--tRNA ligase from Chlamydia abortus (strain DSM 27085 / S26/3) (Chlamydophila abortus).